A 457-amino-acid chain; its full sequence is Serine/threonine-protein phosphatase 2A regulatory subunit B'' subunit gamma (457 aa).

EF-hand domains lie at 276–311 and 344–379; these read PSAL…TLTS and KEPA…IQEQ. Aspartate 289, aspartate 291, asparagine 293, methionine 295, and glutamate 300 together coordinate Ca(2+).

The protein localises to the nucleus. It localises to the cytoplasm. In terms of biological role, possible role in the regulation of cell death. This Danio rerio (Zebrafish) protein is Serine/threonine-protein phosphatase 2A regulatory subunit B'' subunit gamma (ppp2r3c).